The following is a 514-amino-acid chain: Cytochrome P450 monooxygenase FUS8 (514 aa).

The helical transmembrane segment at 24–44 (VFENLTVTNTVCAFIALFIIV) threads the bilayer. N-linked (GlcNAc...) asparagine glycosylation is found at asparagine 225 and asparagine 443. Cysteine 460 is a binding site for heme.

The protein belongs to the cytochrome P450 family. The cofactor is heme.

It localises to the membrane. It participates in mycotoxin biosynthesis. In terms of biological role, cytochrome P450 monooxygenase; part of the gene cluster that mediates the biosynthesis of the mycotoxin fusarin C. Within the cluster, FUS1, FUS2, FUS8 and FUS9 are sufficient for fusarin production. The roles of the other FUS members are yet undetermined. The fusarin C synthetase FUS1 is responsible for the condensation of one acetyl-coenzyme A (CoA) unit with six malonyl-CoA units and the amide linkage of the arising heptaketide and homoserine, subsequently releasing the first intermediate, prefusarin, as an alcohol with an open ring structure. The cytochrome P450 monooxygenase FUS8 participates in multiple oxidation processes at carbon C-20 and is able to use the FUS1 product as substrate, resulting in formation of 20-hydroxy-prefusarin. This reaction seems to be essential before the 2-pyrrolidone ring closure can be catalyzed by FUS2, generating 20-hydroxy-fusarin. FUS8 is able to further oxidizes carbon C-20 after ring closure, resulting in the formation of carboxy-fusarin C. As the last step, FUS9 methylates the hydroxyl group at C-21 to generate fusarin C. Fusarin C can then rearrange to epi-fusarin C, the (z)-isomers, and fusarin A and fusarin D. The polypeptide is Cytochrome P450 monooxygenase FUS8 (Gibberella fujikuroi (strain CBS 195.34 / IMI 58289 / NRRL A-6831) (Bakanae and foot rot disease fungus)).